A 264-amino-acid polypeptide reads, in one-letter code: Thymidylate synthase (264 aa).

Arg21 serves as a coordination point for dUMP. His51 contributes to the (6R)-5,10-methylene-5,6,7,8-tetrahydrofolate binding site. 126-127 (RR) contributes to the dUMP binding site. Cys146 functions as the Nucleophile in the catalytic mechanism. DUMP-binding positions include 166–169 (RSAD), Asn177, and 207–209 (HLY). Residue Asp169 coordinates (6R)-5,10-methylene-5,6,7,8-tetrahydrofolate. (6R)-5,10-methylene-5,6,7,8-tetrahydrofolate is bound at residue Ser263.

The protein belongs to the thymidylate synthase family. Bacterial-type ThyA subfamily. In terms of assembly, homodimer.

It is found in the cytoplasm. The enzyme catalyses dUMP + (6R)-5,10-methylene-5,6,7,8-tetrahydrofolate = 7,8-dihydrofolate + dTMP. The protein operates within pyrimidine metabolism; dTTP biosynthesis. In terms of biological role, catalyzes the reductive methylation of 2'-deoxyuridine-5'-monophosphate (dUMP) to 2'-deoxythymidine-5'-monophosphate (dTMP) while utilizing 5,10-methylenetetrahydrofolate (mTHF) as the methyl donor and reductant in the reaction, yielding dihydrofolate (DHF) as a by-product. This enzymatic reaction provides an intracellular de novo source of dTMP, an essential precursor for DNA biosynthesis. This Nitrosococcus oceani (strain ATCC 19707 / BCRC 17464 / JCM 30415 / NCIMB 11848 / C-107) protein is Thymidylate synthase.